A 368-amino-acid chain; its full sequence is Cytochrome b-c1 complex subunit 2, mitochondrial (368 aa).

Residues 1-16 (MLSAARLQFAQGSVRR) constitute a mitochondrion transit peptide. 2 positions are modified to phosphoserine: serine 141 and serine 168.

It belongs to the peptidase M16 family. UQCRC2/QCR2 subfamily. Component of the ubiquinol-cytochrome c oxidoreductase (cytochrome b-c1 complex, complex III, CIII), a multisubunit enzyme composed of 10 subunits. The complex is composed of 3 respiratory subunits cytochrome b (COB), cytochrome c1 (CYT1) and Rieske protein (RIP1), 2 core protein subunits COR1 and QCR2, and 5 low-molecular weight protein subunits QCR6, QCR7, QCR8, QCR9 and QCR10. The complex exists as an obligatory dimer and forms supercomplexes (SCs) in the inner mitochondrial membrane with a monomer or a dimer of cytochrome c oxidase (complex IV, CIV), resulting in 2 different assemblies (supercomplexes III(2)IV and III(2)IV(2)).

The protein localises to the mitochondrion inner membrane. In terms of biological role, component of the ubiquinol-cytochrome c oxidoreductase, a multisubunit transmembrane complex that is part of the mitochondrial electron transport chain which drives oxidative phosphorylation. The respiratory chain contains 3 multisubunit complexes succinate dehydrogenase (complex II, CII), ubiquinol-cytochrome c oxidoreductase (cytochrome b-c1 complex, complex III, CIII) and cytochrome c oxidase (complex IV, CIV), that cooperate to transfer electrons derived from NADH and succinate to molecular oxygen, creating an electrochemical gradient over the inner membrane that drives transmembrane transport and the ATP synthase. The cytochrome b-c1 complex catalyzes electron transfer from ubiquinol to cytochrome c, linking this redox reaction to translocation of protons across the mitochondrial inner membrane, with protons being carried across the membrane as hydrogens on the quinol. In the process called Q cycle, 2 protons are consumed from the matrix, 4 protons are released into the intermembrane space and 2 electrons are passed to cytochrome c. The sequence is that of Cytochrome b-c1 complex subunit 2, mitochondrial (QCR2) from Saccharomyces cerevisiae (strain ATCC 204508 / S288c) (Baker's yeast).